The following is a 295-amino-acid chain: 4-hydroxy-tetrahydrodipicolinate synthase (295 aa).

Pyruvate is bound at residue threonine 47. Tyrosine 135 functions as the Proton donor/acceptor in the catalytic mechanism. Lysine 163 (schiff-base intermediate with substrate) is an active-site residue. Isoleucine 206 provides a ligand contact to pyruvate.

In terms of assembly, homodimer. In fact, exists in a monomer-dimer equilibrium in solution, shifted in favor of the dimer in presence of the substrate pyruvate; the monomer has significantly reduced activity compared with the dimer.

Its subcellular location is the cytoplasm. It catalyses the reaction L-aspartate 4-semialdehyde + pyruvate = (2S,4S)-4-hydroxy-2,3,4,5-tetrahydrodipicolinate + H2O + H(+). The protein operates within amino-acid biosynthesis; L-lysine biosynthesis via DAP pathway; (S)-tetrahydrodipicolinate from L-aspartate: step 3/4. Is insensitive to lysine-feedback inhibition. Shows ASA substrate inhibition. Functionally, catalyzes the condensation of (S)-aspartate-beta-semialdehyde [(S)-ASA] and pyruvate to 4-hydroxy-tetrahydrodipicolinate (HTPA). The polypeptide is 4-hydroxy-tetrahydrodipicolinate synthase (Staphylococcus aureus (strain MRSA252)).